The following is a 185-amino-acid chain: Ribosome-recycling factor (185 aa).

This sequence belongs to the RRF family.

Its subcellular location is the cytoplasm. Responsible for the release of ribosomes from messenger RNA at the termination of protein biosynthesis. May increase the efficiency of translation by recycling ribosomes from one round of translation to another. In Streptococcus gordonii (strain Challis / ATCC 35105 / BCRC 15272 / CH1 / DL1 / V288), this protein is Ribosome-recycling factor.